The sequence spans 578 residues: Phenylalanine--tRNA ligase beta subunit (578 aa).

In terms of domain architecture, B5 spans 292 to 370 (FDTDEKSVSH…RAYGFDNLEP (79 aa)). Residues aspartate 348, aspartate 354, aspartate 357, and aspartate 358 each coordinate Mg(2+).

This sequence belongs to the phenylalanyl-tRNA synthetase beta subunit family. Type 2 subfamily. As to quaternary structure, tetramer of two alpha and two beta subunits. Mg(2+) is required as a cofactor.

It is found in the cytoplasm. It catalyses the reaction tRNA(Phe) + L-phenylalanine + ATP = L-phenylalanyl-tRNA(Phe) + AMP + diphosphate + H(+). The polypeptide is Phenylalanine--tRNA ligase beta subunit (Halorubrum lacusprofundi (strain ATCC 49239 / DSM 5036 / JCM 8891 / ACAM 34)).